Here is a 416-residue protein sequence, read N- to C-terminus: MAFVAPVSSVFSTSSKSAVCSGRSSFAQFSGLKKVNNTARLQTAEQGSAFGGVSDANDAFFNAVNTMGAPARTSNAPSMKVRVAINGFGRIGRNFIRCWAGRTDSNMDVVCINDTSGVKTASHLLKYDSILGTFDSDVVAGEDSITVDGKTIKVVSNRNPLELPWKEMEIDIVVEATGVFVDAVGAGKHIQAGAKKVLITAPGKGEGVGTFVVGVNDHLYSHDKFDIVSNASCTTNCMAPFMKVLDDEFGVVRGMMTTTHSYTGDQRLLDAGHRDLRRARSAALNIVPTTTGAAKAVALVVPTLAGKLNGIALRVPTPNVSVCDVVMQVSKKTFKEEVNGALLKAANGSMKGIIKYSDEPLVSCDYRGTDESTIIDSSLTMVMGDDMLKVVAWYDNEWGYSQRVVDLGEVMASQWK.

Residues 1-78 (MAFVAPVSSV…APARTSNAPS (78 aa)) constitute a chloroplast transit peptide. Residues 90–91 (RI), aspartate 114, and arginine 158 contribute to the NADP(+) site. Residues 232–234 (SCT), threonine 263, arginine 278, 291–292 (TG), and arginine 314 each bind D-glyceraldehyde 3-phosphate. Cysteine 233 functions as the Nucleophile in the catalytic mechanism. Residue asparagine 396 coordinates NADP(+).

This sequence belongs to the glyceraldehyde-3-phosphate dehydrogenase family. As to quaternary structure, homotetramer.

The protein resides in the plastid. It localises to the chloroplast. The enzyme catalyses D-glyceraldehyde 3-phosphate + phosphate + NADP(+) = (2R)-3-phospho-glyceroyl phosphate + NADPH + H(+). The protein operates within carbohydrate biosynthesis; Calvin cycle. The protein is Glyceraldehyde-3-phosphate dehydrogenase, chloroplastic (GAPA) of Gracilaria gracilis (Red alga).